The primary structure comprises 41 residues: Large ribosomal subunit protein bL36 (41 aa).

It belongs to the bacterial ribosomal protein bL36 family.

In Xylella fastidiosa (strain 9a5c), this protein is Large ribosomal subunit protein bL36.